The sequence spans 483 residues: Cysteine proteinase 1, mitochondrial (483 aa).

The N-terminal 30 residues, 1–30 (MLPTSVSRSLYLKTFRSHLLRAPQIVLKRM), are a transit peptide targeting the mitochondrion. Active-site residues include Cys-102, His-398, and Asn-421. Lys-483 is a propeptide (removed in mature form; by autocatalysis).

Belongs to the peptidase C1 family. In terms of assembly, homohexamer. Binds to nucleic acids. Binds single-stranded DNA and RNA with higher affinity than double-stranded DNA. Post-translationally, the N-terminus of isoform Cytoplasmic is blocked.

It is found in the mitochondrion. Its subcellular location is the cytoplasm. The enzyme catalyses Inactivates bleomycin B2 (a cytotoxic glycometallopeptide) by hydrolysis of a carboxyamide bond of beta-aminoalanine, but also shows general aminopeptidase activity. The specificity varies somewhat with source, but amino acid arylamides of Met, Leu and Ala are preferred.. With respect to regulation, inhibited by E64, a specific inhibitor of cysteine proteases, N-ethylmaleimide, iodacetamide, and mercury and zinc ions. In terms of biological role, the normal physiological role of the enzyme is unknown, but it is not essential for the viability of yeast cells. Has aminopeptidase activity, shortening substrate peptides sequentially by 1 amino acid. Has bleomycin hydrolase activity, which can protect the cell from the toxic effects of bleomycin. Has homocysteine-thiolactonase activity, protecting the cell against homocysteine toxicity. Acts as a repressor in the GAL4 regulatory system, but this does not require either the peptidase or nucleic acid-binding activities. The polypeptide is Cysteine proteinase 1, mitochondrial (LAP3) (Saccharomyces cerevisiae (strain AWRI1631) (Baker's yeast)).